The sequence spans 634 residues: Threonine--tRNA ligase (634 aa).

The region spanning M1 to T61 is the TGS domain. The interval D243 to P534 is catalytic. Residues C334, H385, and H511 each contribute to the Zn(2+) site.

It belongs to the class-II aminoacyl-tRNA synthetase family. As to quaternary structure, homodimer. Zn(2+) is required as a cofactor.

The protein localises to the cytoplasm. It carries out the reaction tRNA(Thr) + L-threonine + ATP = L-threonyl-tRNA(Thr) + AMP + diphosphate + H(+). Catalyzes the attachment of threonine to tRNA(Thr) in a two-step reaction: L-threonine is first activated by ATP to form Thr-AMP and then transferred to the acceptor end of tRNA(Thr). Also edits incorrectly charged L-seryl-tRNA(Thr). In Xanthomonas oryzae pv. oryzae (strain MAFF 311018), this protein is Threonine--tRNA ligase.